We begin with the raw amino-acid sequence, 137 residues long: Nucleoside diphosphate kinase (137 aa).

Residues Lys-9, Phe-57, Arg-85, Thr-91, Arg-102, and Asn-112 each contribute to the ATP site. Residue His-115 is the Pros-phosphohistidine intermediate of the active site.

The protein belongs to the NDK family. As to quaternary structure, homotetramer. Mg(2+) is required as a cofactor.

It is found in the cytoplasm. It catalyses the reaction a 2'-deoxyribonucleoside 5'-diphosphate + ATP = a 2'-deoxyribonucleoside 5'-triphosphate + ADP. The enzyme catalyses a ribonucleoside 5'-diphosphate + ATP = a ribonucleoside 5'-triphosphate + ADP. In terms of biological role, major role in the synthesis of nucleoside triphosphates other than ATP. The ATP gamma phosphate is transferred to the NDP beta phosphate via a ping-pong mechanism, using a phosphorylated active-site intermediate. The sequence is that of Nucleoside diphosphate kinase from Pelobacter propionicus (strain DSM 2379 / NBRC 103807 / OttBd1).